Here is a 285-residue protein sequence, read N- to C-terminus: 4-diphosphocytidyl-2-C-methyl-D-erythritol kinase (285 aa).

The active site involves Lys-12. Position 95 to 105 (95 to 105) interacts with ATP; sequence PMGGGVGGGSS. Asp-137 is an active-site residue.

It belongs to the GHMP kinase family. IspE subfamily.

The enzyme catalyses 4-CDP-2-C-methyl-D-erythritol + ATP = 4-CDP-2-C-methyl-D-erythritol 2-phosphate + ADP + H(+). It participates in isoprenoid biosynthesis; isopentenyl diphosphate biosynthesis via DXP pathway; isopentenyl diphosphate from 1-deoxy-D-xylulose 5-phosphate: step 3/6. In terms of biological role, catalyzes the phosphorylation of the position 2 hydroxy group of 4-diphosphocytidyl-2C-methyl-D-erythritol. The sequence is that of 4-diphosphocytidyl-2-C-methyl-D-erythritol kinase from Actinobacillus pleuropneumoniae serotype 5b (strain L20).